The primary structure comprises 382 residues: Prophage ps2 probable integrase (382 aa).

Residues A63–V142 enclose the Core-binding (CB) domain. The 207-residue stretch at I170–D376 folds into the Tyr recombinase domain. Active-site residues include R209, K242, H326, R329, and H352. Y363 functions as the O-(3'-phospho-DNA)-tyrosine intermediate in the catalytic mechanism.

The protein belongs to the 'phage' integrase family.

This Lactococcus lactis subsp. lactis (strain IL1403) (Streptococcus lactis) protein is Prophage ps2 probable integrase (ps201).